Reading from the N-terminus, the 458-residue chain is tRNA modification GTPase MnmE (458 aa).

The (6S)-5-formyl-5,6,7,8-tetrahydrofolate site is built by arginine 26, glutamate 88, and arginine 127. The 155-residue stretch at 224–378 folds into the TrmE-type G domain; it reads GLSTAIIGRP…IEDRINQLFF (155 aa). Asparagine 234 provides a ligand contact to K(+). GTP-binding positions include 234-239, 253-259, and 278-281; these read NVGKSS, TDIAGTT, and DTAG. Serine 238 lines the Mg(2+) pocket. Residues threonine 253, isoleucine 255, and threonine 258 each contribute to the K(+) site. Residue threonine 259 participates in Mg(2+) binding. Lysine 458 is a binding site for (6S)-5-formyl-5,6,7,8-tetrahydrofolate.

Belongs to the TRAFAC class TrmE-Era-EngA-EngB-Septin-like GTPase superfamily. TrmE GTPase family. As to quaternary structure, homodimer. Heterotetramer of two MnmE and two MnmG subunits. K(+) is required as a cofactor.

Its subcellular location is the cytoplasm. Exhibits a very high intrinsic GTPase hydrolysis rate. Involved in the addition of a carboxymethylaminomethyl (cmnm) group at the wobble position (U34) of certain tRNAs, forming tRNA-cmnm(5)s(2)U34. This chain is tRNA modification GTPase MnmE, found in Streptococcus pyogenes serotype M3 (strain ATCC BAA-595 / MGAS315).